The chain runs to 357 residues: Phosphoribosylformylglycinamidine cyclo-ligase (357 aa).

This sequence belongs to the AIR synthase family.

The protein localises to the cytoplasm. The catalysed reaction is 2-formamido-N(1)-(5-O-phospho-beta-D-ribosyl)acetamidine + ATP = 5-amino-1-(5-phospho-beta-D-ribosyl)imidazole + ADP + phosphate + H(+). It participates in purine metabolism; IMP biosynthesis via de novo pathway; 5-amino-1-(5-phospho-D-ribosyl)imidazole from N(2)-formyl-N(1)-(5-phospho-D-ribosyl)glycinamide: step 2/2. This chain is Phosphoribosylformylglycinamidine cyclo-ligase, found in Rhizobium etli (strain CIAT 652).